The following is a 567-amino-acid chain: Urease subunit alpha (567 aa).

The Urease domain occupies 130 to 567 (GGIDTHIHFI…LPLAQRYFLF (438 aa)). Residues H135, H137, and K218 each coordinate Ni(2+). K218 carries the post-translational modification N6-carboxylysine. A substrate-binding site is contributed by H220. Positions 247 and 273 each coordinate Ni(2+). Residue H321 is the Proton donor of the active site. D361 contacts Ni(2+).

The protein belongs to the metallo-dependent hydrolases superfamily. Urease alpha subunit family. Heterotrimer of UreA (gamma), UreB (beta) and UreC (alpha) subunits. Three heterotrimers associate to form the active enzyme. Ni cation is required as a cofactor. Carboxylation allows a single lysine to coordinate two nickel ions.

It is found in the cytoplasm. The enzyme catalyses urea + 2 H2O + H(+) = hydrogencarbonate + 2 NH4(+). It participates in nitrogen metabolism; urea degradation; CO(2) and NH(3) from urea (urease route): step 1/1. The sequence is that of Urease subunit alpha from Methylobacillus flagellatus (strain ATCC 51484 / DSM 6875 / VKM B-1610 / KT).